We begin with the raw amino-acid sequence, 328 residues long: NADH:quinone reductase (328 aa).

FMN contacts are provided by residues Gly22–Gln24, Thr75, Lys124, Ala150, Ser178–Gly180, and Gly201–Thr202.

The protein belongs to the nitronate monooxygenase family. As to quaternary structure, monomer. It depends on FMN as a cofactor.

It carries out the reaction a quinone + NADH + H(+) = a quinol + NAD(+). Functionally, catalyzes the NADH-dependent reduction of a broad spectrum of quinone substrates, generating the corresponding hydroquinones. Highly prefers NADH to NADPH as a reducing substrate. Also displays a small NADH oxidase activity. Does not exhibit nitronate monooxygenase activity; is inactive against propionate 3-nitronate, 3-nitropropionate, nitroethane, 1-nitropropane, 2-nitropropane, and the anionic forms ethylnitronate, propyl-1-nitronate, and propyl-2-nitronate. Has no azoreductase activity since it is not able to reduce the azo dye methyl red with NADH. May be required to maintain an appropriate [NAD(+)]/[NADH] ratio for the catabolism of fatty acids in P.aeruginosa PAO1. The chain is NADH:quinone reductase from Pseudomonas aeruginosa (strain ATCC 15692 / DSM 22644 / CIP 104116 / JCM 14847 / LMG 12228 / 1C / PRS 101 / PAO1).